A 215-amino-acid chain; its full sequence is 3-isopropylmalate dehydratase small subunit (215 aa).

This sequence belongs to the LeuD family. LeuD type 1 subfamily. In terms of assembly, heterodimer of LeuC and LeuD.

The enzyme catalyses (2R,3S)-3-isopropylmalate = (2S)-2-isopropylmalate. It participates in amino-acid biosynthesis; L-leucine biosynthesis; L-leucine from 3-methyl-2-oxobutanoate: step 2/4. In terms of biological role, catalyzes the isomerization between 2-isopropylmalate and 3-isopropylmalate, via the formation of 2-isopropylmaleate. This is 3-isopropylmalate dehydratase small subunit from Polynucleobacter asymbioticus (strain DSM 18221 / CIP 109841 / QLW-P1DMWA-1) (Polynucleobacter necessarius subsp. asymbioticus).